The chain runs to 242 residues: NAD(P)H-hydrate epimerase (242 aa).

The region spanning 11–221 (AKALDAELMS…KVITKKFNLS (211 aa)) is the YjeF N-terminal domain. (6S)-NADPHX is bound at residue 61–65 (NNGGD). 2 residues coordinate K(+): Asn-62 and Asp-128. (6S)-NADPHX is bound by residues 132–138 (GFSFKGP) and Asp-161. Ser-164 serves as a coordination point for K(+).

This sequence belongs to the NnrE/AIBP family. It depends on K(+) as a cofactor.

It localises to the cytoplasm. It is found in the mitochondrion. Its subcellular location is the nucleus. It catalyses the reaction (6R)-NADHX = (6S)-NADHX. The catalysed reaction is (6R)-NADPHX = (6S)-NADPHX. Its function is as follows. Catalyzes the epimerization of the S- and R-forms of NAD(P)HX, a damaged form of NAD(P)H that is a result of enzymatic or heat-dependent hydration. This is a prerequisite for the S-specific NAD(P)H-hydrate dehydratase to allow the repair of both epimers of NAD(P)HX. May have a role in meiosis. This Schizosaccharomyces pombe (strain 972 / ATCC 24843) (Fission yeast) protein is NAD(P)H-hydrate epimerase (mug182).